Reading from the N-terminus, the 437-residue chain is Adenylosuccinate synthetase 1 (437 aa).

GTP contacts are provided by residues 13–19 and 41–43; these read GDEGKGK and GHT. Aspartate 14 acts as the Proton acceptor in catalysis. Mg(2+) contacts are provided by aspartate 14 and glycine 41. IMP contacts are provided by residues 14–17, 39–42, threonine 130, arginine 144, glutamine 225, threonine 240, and arginine 310; these read DEGK and NAGH. Histidine 42 (proton donor) is an active-site residue. 306-312 provides a ligand contact to substrate; the sequence is ATTGRLR. Residues arginine 312, 338-340, and 421-423 contribute to the GTP site; these read KLD and STG.

Belongs to the adenylosuccinate synthetase family. As to quaternary structure, homodimer. Mg(2+) is required as a cofactor.

The protein resides in the cytoplasm. It carries out the reaction IMP + L-aspartate + GTP = N(6)-(1,2-dicarboxyethyl)-AMP + GDP + phosphate + 2 H(+). It participates in purine metabolism; AMP biosynthesis via de novo pathway; AMP from IMP: step 1/2. In terms of biological role, plays an important role in the de novo pathway of purine nucleotide biosynthesis. Catalyzes the first committed step in the biosynthesis of AMP from IMP. In Pseudoalteromonas translucida (strain TAC 125), this protein is Adenylosuccinate synthetase 1.